Consider the following 593-residue polypeptide: MDTTIDGFADSYEISSTSFVATDNTDSSIVYLAAEQVLTGPDVSALQLLSNSFESVFDSPDDFYSDAKLVLSDGREVSFHRCVLSARSSFFKSALAAAKKEKDSNNTAAVKLELKEIAKDYEVGFDSVVTVLAYVYSSRVRPPPKGVSECADENCCHVACRPAVDFMLEVLYLAFIFKIPELITLYQRHLLDVVDKVVIEDTLVILKLANICGKACMKLLDRCKEIIVKSNVDMVSLEKSLPEELVKEIIDRRKELGLEVPKVKKHVSNVHKALDSDDIELVKLLLKEDHTNLDDACALHFAVAYCNVKTATDLLKLDLADVNHRNPRGYTVLHVAAMRKEPQLILSLLEKGASASEATLEGRTALMIAKQATMAVECNNIPEQCKHSLKGRLCVEILEQEDKREQIPRDVPPSFAVAADELKMTLLDLENRVALAQRLFPTEAQAAMEIAEMKGTCEFIVTSLEPDRLTGTKRTSPGVKIAPFRILEEHQSRLKALSKTVELGKRFFPRCSAVLDQIMNCEDLTQLACGEDDTAEKRLQKKQRYMEIQETLKKAFSEDNLELGNSSLTDSTSSTSKSTGGKRSNRKLSHRRR.

A phosphoserine mark is found at serine 11, serine 15, serine 55, and serine 59. Residues 65 to 144 (SDAKLVLSDG…VYSSRVRPPP (80 aa)) enclose the BTB domain. A C2HC NPR-type zinc finger spans residues 147–161 (VSECADENCCHVACR). 2 residues coordinate Zn(2+): cysteine 150 and cysteine 155. Residue cysteine 156 is modified to S-nitrosocysteine. 2 residues coordinate Zn(2+): histidine 157 and cysteine 160. 5 ANK repeats span residues 229–258 (KSNV…ELGL), 265–295 (KHVS…NLDD), 297–324 (CALH…DVNH), 328–357 (RGYT…SASE), and 361–397 (EGRT…CVEI). The short motif at 345–348 (ILSL) is the SIM3, required fo binding to SUMO3 and subsequent sumoylation element. The segment at 387 to 525 (HSLKGRLCVE…DQIMNCEDLT (139 aa)) is salicylic acid-binding core (SBC). Arginine 432 is a binding site for salicylate. A Nuclear localization signal motif is present at residues 537–554 (KRLQKKQRYMEIQETLKK). The disordered stretch occupies residues 563–593 (LGNSSLTDSTSSTSKSTGGKRSNRKLSHRRR). Low complexity predominate over residues 566 to 579 (SSLTDSTSSTSKST). Residues 583-593 (RSNRKLSHRRR) are compositionally biased toward basic residues.

This sequence belongs to the plant 'ANKYRIN-BTB/POZ' family. 'NPR1-like' subfamily. In terms of assembly, homodimer. Oligomer of dimers in an uninduced quiescent state; disulfide-linked. Forms activated (i.e. sumoylated) homodimers and monomers upon systemic acquired resistance (SAR) induction. Interacts with TGA1, TGA3, TGA4, TGA5, TGA6, TGA7 and with reduced forms of TGA1 and TGA4. Activated homodimer binds two TGA3 dimers in the presence of DNA via its ANK 2 repeat (265-295), thus forming a TGA3(2)-NPR1(2)-TGA3(2) complex in which NPR1 serves as a transcription cofactor by bridging two transcription factor complexes in an enhanceosome. Interacts with NIMIN-1 and NIMIN-3 via its C-terminal region, and with NIMIN-2 via its N-terminal region. Interacts with SUMO3 but not with SUMO1 and SUMO2; this interaction is required for phosphorylation at Ser-11 and Ser-15, and triggers activation by sumoylation and subsequent degradation. Binds to NPR3 and NPR4; these interactions are promoted by association of salicylic acid (SA) with NPR3, but disrupted by SA association with NPR4, probably due to conformational changes. Binds to CUL3A, a core component of the cullin-RING ubiquitin ligases (CRL); this interaction requires NPR3 and NPR4. Interacts with NPR2 independently of SA. Binds to WRKY70 when unmodified (i.e. not sumoylated). Post-translationally, phosphorylation at Ser-55 and Ser-59 prevents sumoylation to ensure stability and quiescence. In terms of processing, phosphorylated at Ser-11 and Ser-15 in the nucleus; facilitates its recruitment to a cullin3-based ubiquitin ligase leading to polyubiquitination and subsequent CUL3/CSN-mediated degradation. This phosphorylation at Ser-11 and Ser-15 requires interaction with SUMO3, and promotes in turn activation by sumoylation and subsequent degradation. Ubiquitinated. Post-translationally, sumoylated by SUMO3 independently of an E3 ligase to activate defense gene expression by switching from association with WRKY transcriptional repressors (e.g. WRKY70) to TGA transcriptional activators (e.g. TGA3). Sumoylation is inhibited by phosphorylation at Ser-55 and Ser-59, but seems to promote phosphorylation at Ser-11 and Ser-15. Sumoylation also triggers degradation, making immune induction transient. In terms of processing, the Cys-82-SH group reacts with Cys-216-SH of the other subunit to form an intermolecular disulfide. This disulfide might subsequently be reduced upon systemic acquired resistance (SAR) induction. S-nitrosylation at Cys-156 facilitates its oligomerization.

Its subcellular location is the cytoplasm. The protein localises to the nucleus. It is found in the nuclear body. Its pathway is protein modification; protein ubiquitination. Salicylic acid (SA)-binding substrate-specific adapter of an E3 ubiquitin-protein ligase complex (CUL3-RBX1-BTB) which mediates the ubiquitination and subsequent proteasomal degradation of target proteins. Transcription cofactor that represses gene expression in the absence of salicylic acid (SA), when attached to negative cis-elements (W-box) with WRKY transcription factors (e.g. WRKY70), but stimulates gene expression upon activation by SA, when sumoylated and attached to positive cis-elements (as-1) with TGA transcription factors (e.g. TGA3), thus confering immunity through a series of gene regulations ending in a significant increase in antimicrobial and defense genes expression (e.g. PR-1 and PR-2). Binds to SA with low capacity; this leads to conformational changes. Key positive regulator of the SA-dependent signaling pathway that negatively regulates jasmonic acid (JA)-dependent signaling pathway. Controls the onset of systemic acquired resistance (SAR). Upon SAR induction, a biphasic change in cellular reduction potential occurs, resulting in reduction of the cytoplasmic oligomeric form to dimeric and monomeric forms, which accumulate in the nucleus and activate gene expression. Appears to control lesion expansion by acting as an inhibitor of programmed cell death (PCD) during effector-triggered immunity (ETI) that occurs in response to incompatible interaction with avirulent pathogenic bacteria (i.e. Pseudomonas syringae ES4326/avrRpt2) ending in a hypersensitive response (HR). Phosphorylated form is target of proteasome degradation. The chain is Regulatory protein NPR1 from Arabidopsis thaliana (Mouse-ear cress).